Reading from the N-terminus, the 102-residue chain is Integration host factor subunit alpha (102 aa).

It belongs to the bacterial histone-like protein family. As to quaternary structure, heterodimer of an alpha and a beta chain.

In terms of biological role, this protein is one of the two subunits of integration host factor, a specific DNA-binding protein that functions in genetic recombination as well as in transcriptional and translational control. This chain is Integration host factor subunit alpha, found in Chromohalobacter salexigens (strain ATCC BAA-138 / DSM 3043 / CIP 106854 / NCIMB 13768 / 1H11).